A 504-amino-acid polypeptide reads, in one-letter code: MSILLCFLCLLPVFLVSLSILSKRLKPSKWKLPPGPKTLPIIGNLHNLTGLPHTCFRNLSQKFGPVMLLHFGFVPVVVISSKEGAEEALKTQDLECCSRPETVATRMISYNFKDIGFAPYGEEWKALRKLVVMELLNTKKFQSFRYIREEENDLLIKKLTESALKKSPVNLKKTLFTLVASIVCRLAFGVNIHKCEFVDEDNVADLVNKFEMLVAGVAFTDFFPGVGWLVDRISGQNKTLNNVFSELDTFFQNVLDDHIKPGRQVSENPDVVDVMLDLMKKQEKDGESFKLTTDHLKGIISDIFLAGVNTSAVTLNWAMAELIRNPRVMKKVQDEIRTTLGDKKQRITEQDLSQVHYFKLVVKEIFRLHPAAPLLLPRETMSHVKIQGYDIPVKTQMMINIYSIARDPKLWTNPDEFNPDRFLDSSIDYRGLNFELLPFGSGRRICPGMTLGITTVELGLLNLLYFFDWVVPVGKNVKDINLEETGSIIISKKTTLELVPLVHH.

A helical membrane pass occupies residues M1 to L21. A Glycyl lysine isopeptide (Lys-Gly) (interchain with G-Cter in ubiquitin) cross-link involves residue K82. C446 provides a ligand contact to heme.

Belongs to the cytochrome P450 family. Heme is required as a cofactor. As to expression, highly expressed in rosette leaves. Also expressed in roots, leaves, flowers, and siliques.

It is found in the membrane. In Arabidopsis thaliana (Mouse-ear cress), this protein is Cytochrome P450 71B7 (CYP71B7).